We begin with the raw amino-acid sequence, 546 residues long: Probable protein kinase UbiB (546 aa).

The region spanning 123–501 (DFQEIPLASA…RTNHGQALFL (379 aa)) is the Protein kinase domain. ATP contacts are provided by residues 129–137 (LASASISQV) and K152. Catalysis depends on D287, which acts as the Proton acceptor. The next 2 helical transmembrane spans lie at 497 to 517 (QALFLFGVGATLVTSSIFLYI) and 521 to 541 (YLKIFSIFLFVIGIFIWTIGW).

It belongs to the ABC1 family. UbiB subfamily.

Its subcellular location is the cell inner membrane. It functions in the pathway cofactor biosynthesis; ubiquinone biosynthesis [regulation]. Its function is as follows. Is probably a protein kinase regulator of UbiI activity which is involved in aerobic coenzyme Q (ubiquinone) biosynthesis. This is Probable protein kinase UbiB from Blochmanniella pennsylvanica (strain BPEN).